A 188-amino-acid chain; its full sequence is CyanoP (188 aa).

The signal sequence occupies residues 1–23 (MLKKSLSTAVVLVTLLLSFTLTA). Residue cysteine 24 is the site of N-palmitoyl cysteine attachment. Cysteine 24 carries S-diacylglycerol cysteine lipidation.

This sequence belongs to the PsbP family. CyanoP subfamily. As to quaternary structure, monomer. Present in about 3% of photosystem II (PSII) preparations. Purifies with partially assembled PSII complexes, in addition to a small amount of monomeric and dimeric PSII, and trimeric PSI.

The protein localises to the cellular thylakoid membrane. In terms of biological role, plays a role in the early stages of photosystem II (PSII) assembly; binds to D2 (psbD) and may facilitate its incorporation into PSII. Required for optimal photoautotrophic growth in the absence of Ca(2+) or Cl(-), functions in optimizing PSII water oxidation/O(2) evolving activity. Might be involved in assembly of the oxygen evolving complex. The sequence is that of CyanoP from Synechocystis sp. (strain ATCC 27184 / PCC 6803 / Kazusa).